The following is a 173-amino-acid chain: 2-C-methyl-D-erythritol 2,4-cyclodiphosphate synthase (173 aa).

2 residues coordinate a divalent metal cation: aspartate 17 and histidine 19. 4-CDP-2-C-methyl-D-erythritol 2-phosphate-binding positions include 17–19 (DVH) and 49–50 (HS). Position 57 (histidine 57) interacts with a divalent metal cation. 4-CDP-2-C-methyl-D-erythritol 2-phosphate-binding positions include 76 to 80 (FPNTD), 147 to 150 (TTTE), phenylalanine 154, and arginine 157.

It belongs to the IspF family. As to quaternary structure, homotrimer. The cofactor is a divalent metal cation.

It carries out the reaction 4-CDP-2-C-methyl-D-erythritol 2-phosphate = 2-C-methyl-D-erythritol 2,4-cyclic diphosphate + CMP. It functions in the pathway isoprenoid biosynthesis; isopentenyl diphosphate biosynthesis via DXP pathway; isopentenyl diphosphate from 1-deoxy-D-xylulose 5-phosphate: step 4/6. In terms of biological role, involved in the biosynthesis of isopentenyl diphosphate (IPP) and dimethylallyl diphosphate (DMAPP), two major building blocks of isoprenoid compounds. Catalyzes the conversion of 4-diphosphocytidyl-2-C-methyl-D-erythritol 2-phosphate (CDP-ME2P) to 2-C-methyl-D-erythritol 2,4-cyclodiphosphate (ME-CPP) with a corresponding release of cytidine 5-monophosphate (CMP). This Ehrlichia canis (strain Jake) protein is 2-C-methyl-D-erythritol 2,4-cyclodiphosphate synthase.